Reading from the N-terminus, the 588-residue chain is ATP-dependent lipid A-core flippase (588 aa).

6 consecutive transmembrane segments (helical) span residues 23–43 (FWPV…IDAG), 56–76 (FITI…IGIT), 141–161 (DALT…TVMM), 162–182 (VICW…GIIV), 257–277 (LVIA…STVI), and 278–298 (TISA…IKPM). The ABC transmembrane type-1 domain occupies 28–310 (LLGVLANILY…LTTLNATIQR (283 aa)). The ABC transporter domain maps to 342 to 576 (IEFKHVYHAY…DGHYAQLYKV (235 aa)). 375–382 (GHSGSGKT) contacts ATP.

This sequence belongs to the ABC transporter superfamily. Lipid exporter (TC 3.A.1.106) family. In terms of assembly, homodimer.

It localises to the cell inner membrane. The enzyme catalyses ATP + H2O + lipid A-core oligosaccharideSide 1 = ADP + phosphate + lipid A-core oligosaccharideSide 2.. Functionally, involved in lipopolysaccharide (LPS) biosynthesis. Translocates lipid A-core from the inner to the outer leaflet of the inner membrane. Transmembrane domains (TMD) form a pore in the inner membrane and the ATP-binding domain (NBD) is responsible for energy generation. The sequence is that of ATP-dependent lipid A-core flippase from Legionella pneumophila (strain Paris).